A 235-amino-acid polypeptide reads, in one-letter code: Endonuclease V (235 aa).

The Mg(2+) site is built by D47 and D115.

Belongs to the endonuclease V family. It depends on Mg(2+) as a cofactor.

Its subcellular location is the cytoplasm. It carries out the reaction Endonucleolytic cleavage at apurinic or apyrimidinic sites to products with a 5'-phosphate.. Functionally, DNA repair enzyme involved in the repair of deaminated bases. Selectively cleaves double-stranded DNA at the second phosphodiester bond 3' to a deoxyinosine leaving behind the intact lesion on the nicked DNA. The protein is Endonuclease V of Myxococcus xanthus (strain DK1622).